The chain runs to 641 residues: 1-deoxy-D-xylulose-5-phosphate synthase (641 aa).

Residues histidine 79 and 120-122 each bind thiamine diphosphate; that span reads AHS. Residue aspartate 151 coordinates Mg(2+). Thiamine diphosphate contacts are provided by residues 152–153, asparagine 180, tyrosine 290, and glutamate 372; that span reads GA. Residue asparagine 180 participates in Mg(2+) binding.

Belongs to the transketolase family. DXPS subfamily. As to quaternary structure, homodimer. Requires Mg(2+) as cofactor. Thiamine diphosphate is required as a cofactor.

The catalysed reaction is D-glyceraldehyde 3-phosphate + pyruvate + H(+) = 1-deoxy-D-xylulose 5-phosphate + CO2. It participates in metabolic intermediate biosynthesis; 1-deoxy-D-xylulose 5-phosphate biosynthesis; 1-deoxy-D-xylulose 5-phosphate from D-glyceraldehyde 3-phosphate and pyruvate: step 1/1. Functionally, catalyzes the acyloin condensation reaction between C atoms 2 and 3 of pyruvate and glyceraldehyde 3-phosphate to yield 1-deoxy-D-xylulose-5-phosphate (DXP). This Bradyrhizobium sp. (strain ORS 278) protein is 1-deoxy-D-xylulose-5-phosphate synthase.